We begin with the raw amino-acid sequence, 225 residues long: NAD(P)H-quinone oxidoreductase subunit K, chloroplastic (225 aa).

[4Fe-4S] cluster is bound by residues Cys-43, Cys-44, Cys-108, and Cys-139.

This sequence belongs to the complex I 20 kDa subunit family. As to quaternary structure, NDH is composed of at least 16 different subunits, 5 of which are encoded in the nucleus. The cofactor is [4Fe-4S] cluster.

It is found in the plastid. The protein localises to the chloroplast thylakoid membrane. The catalysed reaction is a plastoquinone + NADH + (n+1) H(+)(in) = a plastoquinol + NAD(+) + n H(+)(out). It catalyses the reaction a plastoquinone + NADPH + (n+1) H(+)(in) = a plastoquinol + NADP(+) + n H(+)(out). Functionally, NDH shuttles electrons from NAD(P)H:plastoquinone, via FMN and iron-sulfur (Fe-S) centers, to quinones in the photosynthetic chain and possibly in a chloroplast respiratory chain. The immediate electron acceptor for the enzyme in this species is believed to be plastoquinone. Couples the redox reaction to proton translocation, and thus conserves the redox energy in a proton gradient. This Triticum aestivum (Wheat) protein is NAD(P)H-quinone oxidoreductase subunit K, chloroplastic.